A 212-amino-acid chain; its full sequence is Redox-sensing transcriptional repressor Rex (212 aa).

A DNA-binding region (H-T-H motif) is located at residues 17–56 (KYHRYLQELMENDVDRISSKELSEKIGFTASQIRQDLNCF). Position 91 to 96 (91 to 96 (GAGNIG)) interacts with NAD(+).

Belongs to the transcriptional regulatory Rex family. In terms of assembly, homodimer.

The protein resides in the cytoplasm. Its function is as follows. Modulates transcription in response to changes in cellular NADH/NAD(+) redox state. The protein is Redox-sensing transcriptional repressor Rex of Clostridium perfringens (strain ATCC 13124 / DSM 756 / JCM 1290 / NCIMB 6125 / NCTC 8237 / Type A).